Consider the following 531-residue polypeptide: Zinc finger protein 703-B (531 aa).

Positions 1–10 (MNCSPPGSCT) are enriched in polar residues. Disordered stretches follow at residues 1 to 28 (MNCSPPGSCTDTERQRSGTPATPCATLA), 88 to 249 (SQIG…VAPI), and 295 to 318 (VGNQLPGTLGLPGKPPSSSPLTGA). 2 stretches are compositionally biased toward low complexity: residues 19 to 28 (TPATPCATLA) and 113 to 122 (RSSSLKLGES). The span at 171–180 (SPSSRVSSPG) shows a compositional bias: polar residues. Residues 183-198 (CESKNNESQEKKEPEV) are compositionally biased toward basic and acidic residues. Residues 199 to 215 (NKSSLETSQANPTLTRA) show a composition bias toward polar residues. A compositionally biased stretch (low complexity) spans 216 to 227 (SISNSSAESSQS). The C2H2-type zinc finger occupies 404-432 (HICNWVSASGPCDKRFATSEELLAHLRTH).

This sequence belongs to the Elbow/Noc family.

It is found in the nucleus. Its subcellular location is the cytoplasm. Transcriptional corepressor which does not bind directly to DNA and may regulate transcription through recruitment of histone deacetylases to gene promoters. Regulates cell adhesion, migration and proliferation. Involved in specification of the lateral neural plate border (NPB). May be required for segmental gene expression during hindbrain development. This is Zinc finger protein 703-B (znf703-b) from Xenopus laevis (African clawed frog).